The following is a 748-amino-acid chain: Transducin-like enhancer protein 4 (748 aa).

Disordered regions lie at residues 1-20 (MIRD…PHQP) and 157-332 (LPIK…DPLA). The interval 1 to 112 (MIRDLSKMYR…SQEQQQLQAQ (112 aa)) is q domain. The interval 113–179 (HLLTWTWSAC…HQRDRDSIKS (67 aa)) is GP domain. The segment covering 158-177 (PIKDEKKHHDNDHQRDRDSI) has biased composition (basic and acidic residues). Positions 178-189 (KSSSVSPSASFR) are enriched in low complexity. Residues 180–249 (SSVSPSASFR…SPRGSPAHSP (70 aa)) are ccN domain. Phosphoserine occurs at positions 183, 187, 191, and 197. Residues 190–227 (GSEKHRNSTDYSSESKKQKTEEKEIAARYDSDGEKSDD) show a composition bias toward basic and acidic residues. Position 212 is an N6-acetyllysine (lysine 212). Serine 220 is modified (phosphoserine). At serine 225 the chain carries Phosphoserine; by CK2. At serine 240 the chain carries Phosphoserine; by CDK1. Phosphoserine is present on residues serine 244 and serine 248. Residues 248–264 (SPRENGLDKTRLLKKDA) show a composition bias toward basic and acidic residues. The tract at residues 250 to 427 (RENGLDKTRL…PGGKPAYSFH (178 aa)) is SP domain. Lysine 256 is modified (N6-acetyllysine). The segment covering 265–280 (PISPASVASSSSTPSS) has biased composition (low complexity). Phosphoserine is present on serine 267. The span at 292–303 (TTPVSKSNTPTP) shows a compositional bias: polar residues. Threonine 293 carries the phosphothreonine modification. A phosphoserine mark is found at serine 296 and serine 298. Phosphothreonine is present on residues threonine 300, threonine 302, threonine 309, and threonine 315. Phosphoserine is present on serine 394. WD repeat units follow at residues 460–498 (NHGE…NKSP), 506–545 (NRDN…PRIK), 550–589 (SSAP…LVRQ), 592–631 (GHTD…QLQQ), 633–672 (DFTS…KYQL), 674–713 (LHES…SIFQ), and 715–748 (KESS…EVIY).

This sequence belongs to the WD repeat Groucho/TLE family. In terms of assembly, homooligomer and heterooligomer with other family members. Binds PAX5, LEF1, TCF7, TCF7L1 and TCF7L2. Interacts with ZNF703; TLE4 may mediate ZNF703 transcriptional repression. Interacts with SIX3 and SIX6. Interacts with PAX2. In terms of processing, phosphorylated. PAX5 binding increases phosphorylation. Post-translationally, ubiquitinated by XIAP/BIRC4.

It localises to the nucleus. Its function is as follows. Transcriptional corepressor that binds to a number of transcription factors. Inhibits the transcriptional activation mediated by PAX5, and by CTNNB1 and TCF family members in Wnt signaling. The effects of full-length TLE family members may be modulated by association with dominant-negative AES. Essential for the transcriptional repressor activity of SIX3 during retina and lens development and for SIX3 transcriptional auto-repression. Involved in transcriptional repression of GNRHR and enhances MSX1-mediated transcriptional repression of CGA/alpha-GSU. The protein is Transducin-like enhancer protein 4 (Tle4) of Rattus norvegicus (Rat).